The chain runs to 565 residues: Probable transcription factor lepB (565 aa).

A fungal specific transcription factor domain region spans residues 52-259 (KRYAEDVTYL…PRNLDDRDLD (208 aa)).

Its subcellular location is the nucleus. In terms of biological role, probable transcription factor; part of the gene cluster 23 that mediates the biosynthesis of a family of 2-pyridones known as leporins. The sequence is that of Probable transcription factor lepB from Aspergillus flavus (strain ATCC 200026 / FGSC A1120 / IAM 13836 / NRRL 3357 / JCM 12722 / SRRC 167).